We begin with the raw amino-acid sequence, 227 residues long: Pyridoxine/pyridoxamine 5'-phosphate oxidase (227 aa).

Residues 23-26 (RREY) and Lys-81 each bind substrate. FMN is bound by residues 76-81 (RIVLLK), 91-92 (YT), Arg-97, Lys-98, and Gln-120. Residues Tyr-138, Arg-142, and Ser-146 each contribute to the substrate site. FMN-binding positions include 155-156 (QS) and Trp-200. 206-208 (RLH) serves as a coordination point for substrate. Arg-210 contributes to the FMN binding site.

It belongs to the pyridoxamine 5'-phosphate oxidase family. As to quaternary structure, homodimer. It depends on FMN as a cofactor.

The catalysed reaction is pyridoxamine 5'-phosphate + O2 + H2O = pyridoxal 5'-phosphate + H2O2 + NH4(+). It catalyses the reaction pyridoxine 5'-phosphate + O2 = pyridoxal 5'-phosphate + H2O2. Its pathway is cofactor metabolism; pyridoxal 5'-phosphate salvage; pyridoxal 5'-phosphate from pyridoxamine 5'-phosphate: step 1/1. The protein operates within cofactor metabolism; pyridoxal 5'-phosphate salvage; pyridoxal 5'-phosphate from pyridoxine 5'-phosphate: step 1/1. In terms of biological role, catalyzes the oxidation of either pyridoxine 5'-phosphate (PNP) or pyridoxamine 5'-phosphate (PMP) into pyridoxal 5'-phosphate (PLP). The protein is Pyridoxine/pyridoxamine 5'-phosphate oxidase of Pectobacterium atrosepticum (strain SCRI 1043 / ATCC BAA-672) (Erwinia carotovora subsp. atroseptica).